The sequence spans 107 residues: Cytochrome c oxidase assembly protein COX16 homolog, mitochondrial (107 aa).

Topologically, residues 1 to 14 are mitochondrial matrix; sequence MFGYAVRRALRKSK. A helical membrane pass occupies residues 15-37; it reads TLRYGVPMLLLIVGGSFGLREFS. The Mitochondrial intermembrane portion of the chain corresponds to 38 to 107; sequence QIRYDAVKIK…PEILKTNKTT (70 aa). The tract at residues 80–107 is disordered; the sequence is NIRGPRPWEDPDLLQGRNPEILKTNKTT.

It belongs to the COX16 family. In terms of assembly, associates with the MITRAC complex. Interacts with MT-CO2/COX; specifically interacts with newly synthesized MT-CO2/COX. Interacts with SCO1, SCO2 and COA6.

The protein localises to the mitochondrion inner membrane. Its function is as follows. Required for the assembly of the mitochondrial respiratory chain complex IV (CIV), also known as cytochrome c oxidase. Promotes the insertion of copper into the active site of cytochrome c oxidase subunit II (MT-CO2/COX2). Interacts specifically with newly synthesized MT-CO2/COX and its copper center-forming metallochaperones SCO1, SCO2 and COA6. Probably facilitates MT-CO2/COX2 association with the MITRAC assembly intermediate containing MT-CO1/COX1, thereby participating in merging the MT-CO1/COX1 and MT-CO2/COX2 assembly lines. This chain is Cytochrome c oxidase assembly protein COX16 homolog, mitochondrial, found in Bos taurus (Bovine).